A 201-amino-acid polypeptide reads, in one-letter code: Large ribosomal subunit protein uL4 (201 aa).

The segment at 42 to 67 (GNSAQKTRSEVSGGGKKPWNQKGTGR) is disordered.

This sequence belongs to the universal ribosomal protein uL4 family. In terms of assembly, part of the 50S ribosomal subunit.

Its function is as follows. One of the primary rRNA binding proteins, this protein initially binds near the 5'-end of the 23S rRNA. It is important during the early stages of 50S assembly. It makes multiple contacts with different domains of the 23S rRNA in the assembled 50S subunit and ribosome. In terms of biological role, forms part of the polypeptide exit tunnel. The protein is Large ribosomal subunit protein uL4 of Legionella pneumophila (strain Corby).